The following is a 135-amino-acid chain: Peptide methionine sulfoxide reductase MsrB (135 aa).

The MsrB domain maps to 9-131; the sequence is DDYWRSKLTD…NSASIQFEEE (123 aa). Residues cysteine 48, cysteine 51, cysteine 97, and cysteine 100 each coordinate Zn(2+). Cysteine 120 serves as the catalytic Nucleophile.

Belongs to the MsrB Met sulfoxide reductase family. The cofactor is Zn(2+).

The catalysed reaction is L-methionyl-[protein] + [thioredoxin]-disulfide + H2O = L-methionyl-(R)-S-oxide-[protein] + [thioredoxin]-dithiol. The protein is Peptide methionine sulfoxide reductase MsrB of Teredinibacter turnerae (strain ATCC 39867 / T7901).